Consider the following 641-residue polypeptide: Calpain-6 (641 aa).

The Calpain catalytic domain occupies 26-343 (LFCDPTFLPE…FHKLNVCRNV (318 aa)). Residues 344 to 495 (NNPIFGRKEL…IFSEVPVQLR (152 aa)) are domain III. One can recognise a C2 domain in the interval 498–621 (TLDMPKMSCW…YLRKKGGPTA (124 aa)).

Belongs to the peptidase C2 family. As to quaternary structure, interacts (via domain III) with microtubules. Interacts (via domain II) with ARHGEF2 (via the N-terminal zinc finger). Expressed only in placenta.

It is found in the cytoplasm. The protein resides in the perinuclear region. Its subcellular location is the cytoskeleton. The protein localises to the spindle. Its function is as follows. Microtubule-stabilizing protein that may be involved in the regulation of microtubule dynamics and cytoskeletal organization. May act as a regulator of RAC1 activity through interaction with ARHGEF2 to control lamellipodial formation and cell mobility. Does not seem to have protease activity as it has lost the active site residues. The chain is Calpain-6 (CAPN6) from Homo sapiens (Human).